The following is a 347-amino-acid chain: GMP reductase (347 aa).

An NADP(+)-binding site is contributed by 108 to 131 (ADFDKMKQILALSPALKFICIDVA). Positions 181 and 183 each coordinate K(+). C186 (thioimidate intermediate) is an active-site residue. 216-239 (IVSDGGCSVPGDVAKAFGGGADFV) contacts NADP(+).

Belongs to the IMPDH/GMPR family. GuaC type 1 subfamily. In terms of assembly, homotetramer.

It carries out the reaction IMP + NH4(+) + NADP(+) = GMP + NADPH + 2 H(+). Catalyzes the irreversible NADPH-dependent deamination of GMP to IMP. It functions in the conversion of nucleobase, nucleoside and nucleotide derivatives of G to A nucleotides, and in maintaining the intracellular balance of A and G nucleotides. In Yersinia enterocolitica serotype O:8 / biotype 1B (strain NCTC 13174 / 8081), this protein is GMP reductase.